We begin with the raw amino-acid sequence, 168 residues long: Photosystem I assembly protein Ycf3 (168 aa).

3 TPR repeats span residues 35–68 (AFTY…EIDP), 72–105 (SYIL…NPSL), and 120–153 (GEQA…APSN).

The protein belongs to the Ycf3 family.

It is found in the plastid. The protein resides in the chloroplast thylakoid membrane. Functionally, essential for the assembly of the photosystem I (PSI) complex. May act as a chaperone-like factor to guide the assembly of the PSI subunits. This Physcomitrium patens (Spreading-leaved earth moss) protein is Photosystem I assembly protein Ycf3.